The sequence spans 875 residues: Cytosolic phospholipase A2 epsilon (875 aa).

Residues threonine 16–serine 70 form a disordered region. The C2 domain occupies valine 60–phenylalanine 183. Over residues proline 61–serine 70 the composition is skewed to low complexity. Ca(2+) is bound by residues aspartate 97, aspartate 103, aspartate 153, aspartate 155, and aspartate 161. Residues proline 332 to serine 875 form the PLA2c domain. The active-site Nucleophile is serine 420. The active-site Proton acceptor is aspartate 708. Phosphoserine is present on serine 808. The interval glutamate 865 to serine 875 is required for localization at membrane structures.

The cofactor is Ca(2+). Predominantly expressed in brain, heart, skeletal muscle, testis and thyroid. Expressed in neurons but not astrocytes or microglia. Expressed at lower level in stomach.

Its subcellular location is the cytoplasm. It is found in the cytosol. The protein resides in the early endosome membrane. The protein localises to the lysosome membrane. It localises to the cell membrane. It carries out the reaction a 1,2-diacyl-sn-glycero-3-phosphoethanolamine + a 1,2-diacyl-sn-glycero-3-phosphocholine = an N-acyl-1,2-diacyl-sn-glycero-3-phosphoethanolamine + a 2-acyl-sn-glycero-3-phosphocholine + H(+). The catalysed reaction is 1-hexadecanoyl-2-octadecanoyl-sn-glycero-3-phosphocholine + 1,2-di-(9Z-octadecenoyl)-sn-glycero-3-phosphoethanolamine = 2-octadecanoyl-sn-glycero-3-phosphocholine + N-hexadecanoyl-1,2-di-(9Z-octadecenoyl)-sn-glycero-3-phosphoethanolamine + H(+). The enzyme catalyses 1-octadecanoyl-2-hexadecanoyl-sn-glycero-3-phosphocholine + 1,2-di-(9Z-octadecenoyl)-sn-glycero-3-phosphoethanolamine = N-octadecanoyl-1,2-di-(9Z-octadecenoyl)-sn-glycero-3-phosphoethanolamine + 2-hexadecanoyl-sn-glycero-3-phosphocholine + H(+). It catalyses the reaction 1,2-di-(9Z-octadecenoyl)-sn-glycero-3-phosphoethanolamine + 1,2-dihexadecanoyl-sn-glycero-3-phosphocholine = N-hexadecanoyl-1,2-di-(9Z-octadecenoyl)-sn-glycero-3-phosphoethanolamine + 2-hexadecanoyl-sn-glycero-3-phosphocholine + H(+). It carries out the reaction 1,2-di-(5Z,8Z,11Z,14Z-eicosatetraenoyl)-sn-glycero-3-phosphocholine + 1,2-di-(9Z-octadecenoyl)-sn-glycero-3-phosphoethanolamine = N-(5Z,8Z,11Z,14Z-eicosatetraenoyl)-1,2-di-(9Z-octadecenoyl)-sn-glycero-3-phosphoethanolamine + 2-(5Z,8Z,11Z,14Z)-eicosatetraenoyl-sn-glycero-3-phosphocholine + H(+). The catalysed reaction is 2 1,2-di-(9Z-octadecenoyl)-sn-glycero-3-phosphoethanolamine = N,1,2-tri-(9Z-octadecenoyl)-sn-glycero-3-phosphoethanolamine + 2-(9Z-octadecenoyl)-sn-glycero-3-phosphoethanolamine + H(+). The enzyme catalyses a 1,2-diacyl-sn-glycero-3-phosphocholine + H2O = a 1-acyl-sn-glycero-3-phosphocholine + a fatty acid + H(+). It catalyses the reaction 1-(1Z-octadecenyl)-2-(9Z-octadecenoyl)-sn-glycero-3-phosphoethanolamine + 1,2-dihexadecanoyl-sn-glycero-3-phosphocholine = 1-O-(1Z-octadecenoyl)-2-(9Z-octadecenoyl)-sn-glycero-3-phospho-N-hexadecanoyl-ethanolamine + 2-hexadecanoyl-sn-glycero-3-phosphocholine + H(+). It carries out the reaction 1-hexadecanoyl-2-(5Z,8Z,11Z,14Z-eicosatetraenoyl)-sn-glycero-3-phosphocholine + H2O = 1-hexadecanoyl-sn-glycero-3-phosphocholine + (5Z,8Z,11Z,14Z)-eicosatetraenoate + H(+). The catalysed reaction is 1-hexadecanoyl-sn-glycero-3-phosphocholine + H2O = sn-glycerol 3-phosphocholine + hexadecanoate + H(+). With respect to regulation, stimulated by cytosolic Ca(2+). Stimulated by anionic phospholipids such as phosphatidylserine. Calcium-dependent N-acyltransferase involved in the biosynthesis of N-acyl ethanolamines (NAEs) in the brain. Transfers the sn-1 fatty acyl chain of phosphatidylcholine (fatty acyl donor) to the amine group of phosphatidylethanolamine (fatty acyl acceptor) to generate N-acyl phosphatidylethanolamine (NAPE). Similarly can use plasmenylethanolamine as a fatty acyl acceptor to form N-acyl plasmenylethanolamine (N-Acyl-PlsEt). Both NAPE and N-Acyl-PlsEt can serve as precursors of bioactive NAEs like N-arachidonoyl phosphatidylethanolamine also called anandamide. Has weak phospholipase A2 and lysophospholipase activities. Regulates intracellular membrane trafficking that requires modulation of membrane curvature as it occurs by enrichment in lysophospholipids. Promotes tubule formation involved in clathrin-independent endocytotic trafficking and cargo recycling. The polypeptide is Cytosolic phospholipase A2 epsilon (Pla2g4e) (Mus musculus (Mouse)).